The sequence spans 549 residues: MTRKRPALAEPVSSSRSRVTRRSTTGAPSSKKKRSPEPESDADSEDDYDGPSTSQTKKLKRGNSSTNRGKAANKTKRGSFQVKQEIMDDDENEEKIDGEVENGITSREHSPDPSTFKKTAKLQTKKKKKKESPPETPPTSPSPSPSRSVSPSTTKSDISSKKGRKAVVNSVSKVKIEKESTPVKTNGRNLPPKRKKKPVEEETAEEIKLRERAERKARRIEEAKNRPKLTIEQKLAKLRKKKERRERRKEQEKEESMRQKYGQRKIKAEASKWNFGPISSINQRRRDEMMAYFPKANFLAEDGVPKVMNNFRRATVKYNMEVLNPFITCGICDGYIVDATTIIDCMHTFCKSCLLTYFESDNNTCPTCGTFIHGSHPTHYVTYDRAVNELVNQFVPKMENNELDVRKTFLRDCREALGIDTAAEDRERKERLERERITGTNRCYPLERPRFSHHRDDCQVTVNLLPGTANLPLITRPYVRCSEMTTMNTLKKFLSLQIWDDQSRYSDLDMFCDGQLMGKDFSVRFVWMMKRRGQPKSEPLIIRYHMTRT.

A disordered region spans residues 1–263; that stretch reads MTRKRPALAE…EESMRQKYGQ (263 aa). Residues 12–29 show a composition bias toward low complexity; that stretch reads VSSSRSRVTRRSTTGAPS. Composition is skewed to acidic residues over residues 38 to 49 and 87 to 100; these read PESDADSEDDYD and MDDD…DGEV. Basic residues predominate over residues 118 to 130; that stretch reads KTAKLQTKKKKKK. The segment covering 134 to 144 has biased composition (pro residues); the sequence is PETPPTSPSPS. The span at 145–156 shows a compositional bias: low complexity; sequence PSRSVSPSTTKS. Residues 205-235 are compositionally biased toward basic and acidic residues; that stretch reads EEIKLRERAERKARRIEEAKNRPKLTIEQKL. Positions 206-260 form a coiled coil; that stretch reads EIKLRERAERKARRIEEAKNRPKLTIEQKLAKLRKKKERRERRKEQEKEESMRQK. Over residues 236–247 the composition is skewed to basic residues; the sequence is AKLRKKKERRER. The segment covering 248 to 258 has biased composition (basic and acidic residues); sequence RKEQEKEESMR. Residues 329–368 form an RING-type zinc finger; that stretch reads CGICDGYIVDATTIIDCMHTFCKSCLLTYFESDNNTCPTC.

In terms of assembly, component of a PRC1-like complex.

It is found in the nucleus. Its subcellular location is the nucleolus. In terms of biological role, component of a Polycomb group (PcG) multiprotein PRC1-like complex, a complex class required to maintain the transcriptionally repressive state of many genes, throughout development. Required for ubiquitination of histone H2A. Plays a role in the formation of the male-specific genital sensilla (simple sense organs) known as rays. Required for normal migration of the hermaphrodite specific neurons (HSN) and for extension of some neuronal processes. Represses vulval fates in hypodermal cells that do not normally contribute to vulval development. The sequence is that of Polycomb group RING finger protein 3 homolog mig-32 from Caenorhabditis elegans.